The following is a 705-amino-acid chain: Elongation factor G (705 aa).

Positions 8 to 290 (ERYRNFGIMA…GVVHLLPSPA (283 aa)) constitute a tr-type G domain. GTP is bound by residues 17–24 (AHIDAGKT), 88–92 (DTPGH), and 142–145 (NKMD). The interval 290-309 (ADRPPVQGIDENEKEDTRDA) is disordered.

Belongs to the TRAFAC class translation factor GTPase superfamily. Classic translation factor GTPase family. EF-G/EF-2 subfamily.

Its subcellular location is the cytoplasm. Its function is as follows. Catalyzes the GTP-dependent ribosomal translocation step during translation elongation. During this step, the ribosome changes from the pre-translocational (PRE) to the post-translocational (POST) state as the newly formed A-site-bound peptidyl-tRNA and P-site-bound deacylated tRNA move to the P and E sites, respectively. Catalyzes the coordinated movement of the two tRNA molecules, the mRNA and conformational changes in the ribosome. This is Elongation factor G from Xanthomonas campestris pv. campestris (strain 8004).